Reading from the N-terminus, the 492-residue chain is Beclin 1-associated autophagy-related key regulator (492 aa).

Ser29 carries the post-translational modification Phosphoserine. Residues 43-58 (CPLCNTTRRRLTCAKC) are cysteine repeats. The stretch at 71 to 180 (DRERFIDKKE…KLGDLVEKKT (110 aa)) forms a coiled coil. Positions 410–473 (PGVAGESDES…PIASSSAGGM (64 aa)) are disordered. The BATS stretch occupies residues 413–492 (AGESDESGDE…SWFKAYTGHR (80 aa)). Residues 415-433 (ESDESGDERVSDEETDLGT) are compositionally biased toward acidic residues. Ser416 is subject to Phosphoserine. Position 429 is a phosphothreonine (Thr429). Residues 448-473 (SQSVEVSQSQSTQASPPIASSSAGGM) show a composition bias toward low complexity.

It belongs to the ATG14 family. As to quaternary structure, forms homooligomers; homo-oligomerization is essential for the roles in membrane tethering and enhancement of SNARE-mediated fusion. Component of the PI3K (PI3KC3/PI3K-III/class III phosphatidylinositol 3-kinase) complex I (PI3KC3-C1) in which the core composed of the catalytic subunit PIK3C3, the regulatory subunit PIK3R4 and BECN1 is associated with ATG14. PI3KC3-C1 displays a V-shaped architecture with PIK3R4 serving as a bridge between PIK3C3 and the ATG14:BECN1 subcomplex. PI3KC3-C1 can associate with further regulatory subunits. Interacts with PIK3CB. Interacts (via coiled-coil domain) with BECN2 (via coiled-coil domain); this interaction is tighter than BECN2 self-association. Interacts with the STX17-SNAP29 binary t-SNARE complex. Interacts with NRBF2. Interacts with PIK3C3 and BECN1; this interaction is increased in the absence of TMEM39A. Interacts with STEEP1; the interaction is required for trafficking of STING1 from the endoplasmic reticulum. Interacts with ARMC3 (via ARM domains). Post-translationally, ubiquitinated via 'Lys-6', 'Lys-11' and 'Lys-63'-linked polyubiquitin chains on multiple lysines by MARCHF7, leading to ATG14 aggregation and loss of interaction with STX17.

Its subcellular location is the cytoplasm. The protein resides in the endoplasmic reticulum membrane. The protein localises to the preautophagosomal structure membrane. It localises to the cytoplasmic vesicle. It is found in the autophagosome membrane. Its function is as follows. Required for both basal and inducible autophagy. Determines the localization of the autophagy-specific PI3-kinase complex PI3KC3-C1. Plays a role in autophagosome formation and MAP1LC3/LC3 conjugation to phosphatidylethanolamine. Promotes BECN1 translocation from the trans-Golgi network to autophagosomes. Enhances PIK3C3 activity in a BECN1-dependent manner. Essential for the autophagy-dependent phosphorylation of BECN1. Stimulates the phosphorylation of BECN1, but suppresses the phosphorylation PIK3C3 by AMPK. Binds to STX17-SNAP29 binary t-SNARE complex on autophagosomes and primes it for VAMP8 interaction to promote autophagosome-endolysosome fusion. Modulates the hepatic lipid metabolism. This is Beclin 1-associated autophagy-related key regulator from Homo sapiens (Human).